The following is a 904-amino-acid chain: Nitrate reductase [NADH] 2 (904 aa).

Composition is skewed to polar residues over residues 1-10 (MAASVENRQF) and 35-50 (PSPN…NSTI). A disordered region spans residues 1 to 65 (MAASVENRQF…SSEDDDDDDE (65 aa)). Residues 56–65 (SSEDDDDDDE) are compositionally biased toward acidic residues. C183 is a Mo-molybdopterin binding site. The region spanning 531–606 (SKMYSMSEVR…LEDFRIGELI (76 aa)) is the Cytochrome b5 heme-binding domain. Residues H566 and H589 each coordinate heme. An FAD-binding FR-type domain is found at 647–759 (REKIPCKLID…KGPLGHIEYQ (113 aa)). Residues 699 to 702 (RAYT), 716 to 720 (VVKIY), F721, F728, 733 to 735 (QMS), and T786 contribute to the FAD site.

The protein belongs to the nitrate reductase family. In terms of assembly, homodimer. FAD serves as cofactor. Heme is required as a cofactor. The cofactor is Mo-molybdopterin.

The enzyme catalyses nitrite + NAD(+) + H2O = nitrate + NADH + H(+). Its activity is regulated as follows. Regulated by the nitrogen source and controlled by the circadian rhythm. Functionally, nitrate reductase is a key enzyme involved in the first step of nitrate assimilation in plants, fungi and bacteria. In Nicotiana tabacum (Common tobacco), this protein is Nitrate reductase [NADH] 2 (NIA2).